The sequence spans 197 residues: Imidazoleglycerol-phosphate dehydratase (197 aa).

It belongs to the imidazoleglycerol-phosphate dehydratase family.

The protein localises to the cytoplasm. The enzyme catalyses D-erythro-1-(imidazol-4-yl)glycerol 3-phosphate = 3-(imidazol-4-yl)-2-oxopropyl phosphate + H2O. It functions in the pathway amino-acid biosynthesis; L-histidine biosynthesis; L-histidine from 5-phospho-alpha-D-ribose 1-diphosphate: step 6/9. In Pseudomonas putida (strain ATCC 700007 / DSM 6899 / JCM 31910 / BCRC 17059 / LMG 24140 / F1), this protein is Imidazoleglycerol-phosphate dehydratase.